Here is a 1666-residue protein sequence, read N- to C-terminus: Cortactin-binding protein 2 (1666 aa).

Disordered regions lie at residues 1 to 25, 202 to 224, 366 to 411, 457 to 481, and 501 to 619; these read MATD…APAE, EKKR…AEME, IVSS…PAIQ, NANN…SPTS, and RFTS…PKPS. A coiled-coil region spans residues 120 to 274; it reads KMQERMSTQL…MTEQLKRGND (155 aa). Composition is skewed to low complexity over residues 385–398 and 457–468; these read GPST…PSST and NANNDQDQNGNN. A compositionally biased stretch (polar residues) spans 469–481; that stretch reads TQSPPSRDVSPTS. The residue at position 501 (Arg501) is an Asymmetric dimethylarginine. ANK repeat units follow at residues 712 to 742, 746 to 775, 779 to 808, 812 to 841, 845 to 874, and 915 to 945; these read GRPT…DINH, DGHS…QVNA, DGFT…NINH, EGQT…DRSV, DGWT…PACG, and EGWT…EPER. Ser1527 is modified (phosphoserine). The span at 1545 to 1566 shows a compositional bias: basic and acidic residues; that stretch reads SESDISKIADTRDDLRRFDSSR. 2 disordered regions span residues 1545 to 1601 and 1620 to 1666; these read SESD…RSNR and RSKI…KPNQ. Positions 1585–1594 are enriched in polar residues; sequence KEVSPLSSHQ. Residues 1627-1641 are compositionally biased toward low complexity; it reads SQNTKRSSSSSNTRQ. Residues 1648 to 1666 show a composition bias toward basic and acidic residues; sequence SKDEIWNLRNNEQIEKPNQ.

Interacts with CTTN/cortactin SH3 domain. Interacts with STRN, STRN4/zinedin and MOB4/phocein; this interactions mediate the association with the STRIPAK core complex and may regulate dendritic spine distribution of the STRIPAK complex in hippocampal neurons. Activation of glutamate receptors weakens the interaction with STRN and STRN4.

It is found in the cytoplasm. The protein localises to the cell cortex. Its subcellular location is the cell projection. The protein resides in the dendritic spine. Its function is as follows. Regulates the dendritic spine distribution of CTTN/cortactin in hippocampal neurons, and thus controls dendritic spinogenesis and dendritic spine maintenance. Associates with the striatin-interacting phosphatase and kinase (STRIPAK) core complex to regulate dendritic spine distribution of the STRIPAK complex in hippocampal neurons. This chain is Cortactin-binding protein 2 (CTTNBP2), found in Echinops telfairi (Lesser hedgehog tenrec).